The chain runs to 1247 residues: MGDEFPFHHLGYVCLNEIYKHLTLKEIFQLSFSSNQIKRSLGIASIPVKSIFVNFDSQYPKIKLIGESSQLEWVFGIPDGLEYTDVGVYKIGHFKFQCKTSGTAFYTEHYDLENAMLVVIRYMISIFKCSNSIITYLSIDLGVIEDSRAICENFVAFKKVERLSIFQTNYGVERNTLNFAQSFDWICDNLEIKNIHIGADVLEPKMVQKTNGEFDIKLCARRFEQVLTMDHIYLQHADWITSEDLLNLDVQTAMLIENNLTEQDLNAFIKQWLRSDSDKLWWLEVKGKMMFNREEVLKDLDVQDDAYRSLNTRWYVARRSRANPSGNGCARKKMGSLRPKLTELWPFKVYIIFGSILIVFGPAALNRMITLRRMDVETDRPSGSETGIFVSKSAVYPFGNKNEVVKVWWNIDKPENCLDWIGLFDNNDSSFYLDQKSLRQHISPVVFTLTSKNLLNASEVYFGLIDGMTGRLLAKSENVEICKSASLVVHEVKKPENINVYLNTNHGRIEIPKKRSFSRKNGSFRSSFEFDFDVEDLHISLVENSEKLNFDHFIASNQLQNNYIQSKSFSHSHVVEIVFSIEPKTSKKSAPDIMEIASSSQTPPESHWKTYLDAKKRKFYVNHVTKETRWTKPDTLNNNHIEPETPVHKRLSDRSASPRNSFITPRRTITVRSAGCPKSDLIQFFQRDEFKTALYENQDAMQIYNECSVVRHAIHRIQKDLDPPSKFENQPLFVRFVNLFADITQPLPSGWECITMNNRTVFLNHANKETSFYDPRIRRFETKTSRRGRSVPSRSSTAHKGKIDHALISKCEDLRKIAQDNFPQIAERISKKLMLIERFGGLAVASLANDLDITLALSMLDSNTEKLAGEGDNIKMFYEDMKKEKLGKGPSRLCWKVSRDRLLDDAFRIILNVDPFVLKKSRLHIRFEGELALDYGGLSREFFILLSRELFHPKNGYFEYEGNDYHLQLRPRGCETEKEKKWLILCGRVLALAVIHRCYIDVFFTNVFYKSLQKRPVTLMDFKESDAEFYKSMNWLLENDVVDLEMSFVYSSMVNGKLAEQELVPGGESQMVTEANKAEFIDLMCQKKAIRGVEKPLEILLTSFNQILNDNLLNSLESSDLKRILSGSLELDLNDWRTNTIYKGGYSDCHIVVEWFWEVIETMTNQERFDLLLFVTGSSSVPFEGFSALRGNEEISKFCIEKWGDATSFPRAHTCFNRLQLPSYNTKQQLKSKLQQAIVNGMSYSIE.

The 34-residue stretch at 602 to 635 (TPPESHWKTYLDAKKRKFYVNHVTKETRWTKPDT) folds into the WW 1 domain. Positions 633 to 659 (PDTLNNNHIEPETPVHKRLSDRSASPR) are disordered. Residues 641 to 653 (IEPETPVHKRLSD) are compositionally biased toward basic and acidic residues. Positions 745–777 (QPLPSGWECITMNNRTVFLNHANKETSFYDPRI) constitute a WW 2 domain. The 334-residue stretch at 914-1247 (DPFVLKKSRL…IVNGMSYSIE (334 aa)) folds into the HECT domain. Cysteine 1215 functions as the Glycyl thioester intermediate in the catalytic mechanism.

As to expression, expressed in the nervous system throughout the body. In the anterior ganglion, expression is limited to the two lateral outer labial neurons OLLL and OLLR.

Its subcellular location is the cytoplasm. The catalysed reaction is S-ubiquitinyl-[E2 ubiquitin-conjugating enzyme]-L-cysteine + [acceptor protein]-L-lysine = [E2 ubiquitin-conjugating enzyme]-L-cysteine + N(6)-ubiquitinyl-[acceptor protein]-L-lysine.. It participates in protein modification; protein ubiquitination. In terms of biological role, E3 ubiquitin-protein ligase. Functions in the OLL neurons in the anterior ganglion to inhibit avoidance to microbial pathogens such as P.aeruginosa although worms do display avoidance behavior, vacating a P.aeruginosa lawn within 24 hours. Likely to act by inhibiting the neuropeptide receptor npr-1. This Caenorhabditis elegans protein is E3 ubiquitin-protein ligase hecw-1.